Consider the following 411-residue polypeptide: MAEKTEKPTAKKLRDAAKKGQTFKARDIVALIVIATGALAAPALVDLTRIAAEFVRIASTGAQSNPGAYAFAWAKLFLRIAAPFVLLCAAAGALPSLVQSRFTLAVESIRFDLTALDPVKGMKRLFSWRSAKDAVKALLYVGVFALTVRVFADLYHADVFGLFRARPALLGHMWIVLTVRLVLLFLLCALPVLILDAAVEYFLYHRELKMDKHEVKQEYKESEGNHEIKSKRREIHQELLSEEIKANVEQSDFIVANPTHIAIGVYVNPDIVPIPFVSVRETNARALAVIRHAEACGVPVVRNVALARSIYRNSPRRYSFVSHDDIDGVMRVLIWLGEVEAANRGGPPPETRAPTSAEPQARDGVAPLGDACADNAFPDDAPPGAAAPNAGSPDSPAPDGGAPARTGDQNA.

Transmembrane regions (helical) follow at residues 28 to 48, 80 to 100, 137 to 157, and 175 to 195; these read IVAL…VDLT, IAAP…LVQS, ALLY…LYHA, and IVLT…VLIL. The disordered stretch occupies residues 341 to 411; sequence AANRGGPPPE…APARTGDQNA (71 aa). A compositionally biased stretch (low complexity) spans 370 to 404; sequence DACADNAFPDDAPPGAAAPNAGSPDSPAPDGGAPA.

It belongs to the type III secretion exporter family.

Its subcellular location is the cell membrane. Its function is as follows. Part of the bsa type III secretion system, is involved in the intracellular replication of invading bacteria inside the host cell. Probably necessary for the lysis of the vacuole membrane and escape into the host cell cytoplasm. This chain is Secretion apparatus protein BsaZ (bsaZ), found in Burkholderia mallei (strain NCTC 10247).